The following is a 413-amino-acid chain: RING-H2 finger protein ATL54 (413 aa).

The helical transmembrane segment at 83-103 threads the bilayer; the sequence is ISIITITGAVLAILLTGFFLV. Residues 177 to 219 form an RING-type; atypical zinc finger; that stretch reads CPVCLNEFEEDESLRLLPKCNHAFHISCIDTWLSSHTNCPLCR. Disordered stretches follow at residues 238-258 and 321-413; these read VTPG…EDHG and THVE…VFPL. The span at 387-401 shows a compositional bias: low complexity; that stretch reads SSSTLKTNGSSSSVS. Residues 402-413 show a composition bias toward polar residues; sequence CFNKNKSSVFPL.

This sequence belongs to the RING-type zinc finger family. ATL subfamily.

The protein localises to the membrane. It catalyses the reaction S-ubiquitinyl-[E2 ubiquitin-conjugating enzyme]-L-cysteine + [acceptor protein]-L-lysine = [E2 ubiquitin-conjugating enzyme]-L-cysteine + N(6)-ubiquitinyl-[acceptor protein]-L-lysine.. It participates in protein modification; protein ubiquitination. The polypeptide is RING-H2 finger protein ATL54 (ATL54) (Arabidopsis thaliana (Mouse-ear cress)).